Consider the following 554-residue polypeptide: Chaperonin GroEL (554 aa).

ATP is bound by residues 30–33 (TLGP), Lys51, 87–91 (DGTTT), Gly415, 479–481 (NAA), and Asp495.

This sequence belongs to the chaperonin (HSP60) family. Forms a cylinder of 14 subunits composed of two heptameric rings stacked back-to-back. Interacts with the co-chaperonin GroES.

It localises to the cytoplasm. The enzyme catalyses ATP + H2O + a folded polypeptide = ADP + phosphate + an unfolded polypeptide.. Its function is as follows. Together with its co-chaperonin GroES, plays an essential role in assisting protein folding. The GroEL-GroES system forms a nano-cage that allows encapsulation of the non-native substrate proteins and provides a physical environment optimized to promote and accelerate protein folding. The chain is Chaperonin GroEL from Nitrosococcus oceani (strain ATCC 19707 / BCRC 17464 / JCM 30415 / NCIMB 11848 / C-107).